Reading from the N-terminus, the 160-residue chain is MSDDSELTHVTDDGDAQMVDVGEKPDTARRAVARGEITLQPSTVAAIETNDVEKGDVLAVARVGAIQAVKHTWETVPMCHQIPITNVDTEFSTSETAVELTVAVETTGKTGCEMEALEGVTTGLNVVWDMVKAAEKDADGQYPDTGIDSVEVIEKEKRAL.

Residues 1-12 are compositionally biased toward basic and acidic residues; sequence MSDDSELTHVTD. Residues 1–24 are disordered; the sequence is MSDDSELTHVTDDGDAQMVDVGEK. Residues 78–80 and 114–115 contribute to the substrate site; these read MCH and ME. Residue Asp129 is part of the active site.

The protein belongs to the MoaC family. In terms of assembly, homohexamer; trimer of dimers.

It catalyses the reaction (8S)-3',8-cyclo-7,8-dihydroguanosine 5'-triphosphate = cyclic pyranopterin phosphate + diphosphate. It functions in the pathway cofactor biosynthesis; molybdopterin biosynthesis. Its function is as follows. Catalyzes the conversion of (8S)-3',8-cyclo-7,8-dihydroguanosine 5'-triphosphate to cyclic pyranopterin monophosphate (cPMP). This Natronomonas pharaonis (strain ATCC 35678 / DSM 2160 / CIP 103997 / JCM 8858 / NBRC 14720 / NCIMB 2260 / Gabara) (Halobacterium pharaonis) protein is Probable cyclic pyranopterin monophosphate synthase.